Reading from the N-terminus, the 355-residue chain is Guanine nucleotide-binding protein G(i) subunit alpha-2 (355 aa).

The N-myristoyl glycine moiety is linked to residue glycine 2. The S-palmitoyl cysteine moiety is linked to residue cysteine 3. The G-alpha domain occupies 32–355 (REVKLLLLGA…KNNLKDCGLF (324 aa)). The G1 motif stretch occupies residues 35 to 48 (KLLLLGAGESGKST). Residues 40–47 (GAGESGKS), 176–182 (LRTRVKT), 201–205 (DVGGQ), 270–273 (NKKD), and alanine 327 each bind GTP. Mg(2+)-binding residues include serine 47 and threonine 182. Residues 174–182 (DVLRTRVKT) form a G2 motif region. A G3 motif region spans residues 197 to 206 (FKMFDVGGQR). The interval 266 to 273 (ILFLNKKD) is G4 motif. The G5 motif stretch occupies residues 325-330 (TCATDT).

It belongs to the G-alpha family. G(i/o/t/z) subfamily. G proteins are composed of 3 units; alpha, beta and gamma. The alpha chain contains the guanine nucleotide binding site. In this context, interacts with GNB2. Interacts with UNC5B. Interacts with GPSM1. Interacts with RGS12 and RGS14. Interacts (inactive GDP-bound form) with NUCB1 (via GBA motif); the interaction leads to activation of GNAI3. Interacts (inactive GDP-bound form) with CCDC88C/DAPLE (via GBA motif). Interacts (inactive GDP-bound form) with CCDC8A/GIV (via GBA motif).

The protein resides in the cytoplasm. The protein localises to the cell membrane. Its subcellular location is the cytoskeleton. It localises to the microtubule organizing center. It is found in the centrosome. The protein resides in the membrane. Functionally, guanine nucleotide-binding proteins (G proteins) are involved as modulators or transducers in various transmembrane signaling systems. The G(i) proteins are involved in hormonal regulation of adenylate cyclase: they inhibit the cyclase in response to beta-adrenergic stimuli. May play a role in cell division. This is Guanine nucleotide-binding protein G(i) subunit alpha-2 (Gnai2) from Rattus norvegicus (Rat).